A 30-amino-acid polypeptide reads, in one-letter code: Proteinase inhibitor CeKI (30 aa).

Belongs to the protease inhibitor I3 (leguminous Kunitz-type inhibitor) family.

In terms of biological role, potent inhibitor of serine proteases plasma kallikrein, plasmin and coagulation factor XIIa. Weak inhibitor of serine proteases trypsin and coagulation factor Xa. Does not inhibit the serine proteases chymotrypsin, elastase or thrombin. Inhibits kinin release from HMW-kininogen by kallikrein in vitro. The protein is Proteinase inhibitor CeKI of Paubrasilia echinata (Pau Brasil).